The sequence spans 244 residues: METKPVITCLKTLLIIYSFVFWITGVILLAVGVWGKLTLGTYISLIAENSTNAPYVLIGTGTTIVVFGLFGCFATCRGSPWMLKLYAMFLSLVFLAELVAGISGFVFRHEIKDTFLRTYTDAMQTYDGKDDRSQAVDHVQRSLSCCGVQNYTNWSTSPYFLEHGIPPSCCMNETDCNPQDLHNLTVAATKVNQKGCYDLVTSFMETNMGIIAGVAFGIAFSQLIGMLLACCLSRFITANQYEMV.

Residues M1–K11 are Cytoplasmic-facing. The chain crosses the membrane as a helical span at residues T12–G35. The Extracellular segment spans residues K36 to T51. N49 is a glycosylation site (N-linked (GlcNAc...) asparagine). A helical membrane pass occupies residues N52–F70. Topologically, residues G71–W81 are cytoplasmic. Residues M82–F107 traverse the membrane as a helical segment. Residues R108–M208 lie on the Extracellular side of the membrane. N-linked (GlcNAc...) asparagine glycosylation is found at N150, N153, N172, and N183. The chain crosses the membrane as a helical span at residues G209–A229. Residues C230–V244 lie on the Cytoplasmic side of the membrane.

The protein belongs to the tetraspanin (TM4SF) family.

Its subcellular location is the membrane. Functionally, may be involved in cell proliferation and cell motility. This is Tetraspanin-7 (TSPAN7) from Pongo pygmaeus (Bornean orangutan).